We begin with the raw amino-acid sequence, 124 residues long: UPF0102 protein Haur_0145 (124 aa).

The protein belongs to the UPF0102 family.

This Herpetosiphon aurantiacus (strain ATCC 23779 / DSM 785 / 114-95) protein is UPF0102 protein Haur_0145.